A 208-amino-acid chain; its full sequence is uncharacterized protein (208 aa).

Residues 126–151 (VGSGSGSDSSSGSTSSPNTVNNYNSD) form a disordered region. The segment covering 131-141 (GSDSSSGSTSS) has biased composition (low complexity).

This is an uncharacterized protein from Dictyostelium discoideum (Social amoeba).